A 316-amino-acid polypeptide reads, in one-letter code: Alkaline ceramidase YPC1 (316 aa).

The Lumenal segment spans residues Met1–Tyr36. A disulfide bridge links Cys27 with Cys219. An intramembrane segment occupies Ile37–Thr57. The Lumenal portion of the chain corresponds to Tyr58 to Arg68. The stretch at Phe69–Thr89 is an intramembrane region. The Lumenal portion of the chain corresponds to Leu90–Arg93. A helical membrane pass occupies residues Phe94–Val114. The Cytoplasmic portion of the chain corresponds to Cys115–Gln135. The helical transmembrane segment at Ile136 to Tyr156 threads the bilayer. The Lumenal portion of the chain corresponds to Lys157–Asp160. An intramembrane segment occupies Ile161–Thr181. Residues Tyr182–Lys195 lie on the Lumenal side of the membrane. Residues Ala196–Ile216 lie within the membrane without spanning it. The Lumenal portion of the chain corresponds to His217–Ser228. Residues Ile229–Gly249 form a helical membrane-spanning segment. Topologically, residues Met250–Lys316 are cytoplasmic.

Belongs to the alkaline ceramidase family.

It localises to the endoplasmic reticulum membrane. It catalyses the reaction N-hexanoyl-sphinganine + H2O = hexanoate + sphinganine. It carries out the reaction sphinganine + hexadecanoate = N-hexadecanoylsphinganine + H2O. The catalysed reaction is N-hexadecanoyl-(4R)-hydroxysphinganine + H2O = (4R)-hydroxysphinganine + hexadecanoate. The enzyme catalyses N-hexadecanoylsphing-4-enine + H2O = sphing-4-enine + hexadecanoate. It catalyses the reaction an N-acyl-(4R)-4-hydroxysphinganine + H2O = (4R)-hydroxysphinganine + a fatty acid. Alkaline ceramidase that hydrolyzes phytoceramide and also dihydroceramide into phytosphingosine or dihydrosphingosine. Prefers phytoceramide. Also has reverse activity as acyl-CoA-independent ceramide synthase, catalyzing synthesis of phytoceramide and dihydroceramide from palmitic acid and phytosphingosine or dihydrosphingosine. Is not responsible for the breakdown of unsaturated ceramide. Preferentially uses very long chain fatty acids (C-24 and C-26) in vivo compared to C-16 in vitro. In Saccharomyces cerevisiae (strain ATCC 204508 / S288c) (Baker's yeast), this protein is Alkaline ceramidase YPC1 (YPC1).